The chain runs to 254 residues: PF03932 family protein CutC (254 aa).

This sequence belongs to the CutC family.

Its subcellular location is the cytoplasm. This chain is PF03932 family protein CutC, found in Yersinia enterocolitica serotype O:8 / biotype 1B (strain NCTC 13174 / 8081).